The sequence spans 487 residues: UDP-N-acetylmuramate--L-alanine ligase (487 aa).

Position 126 to 132 (126 to 132) interacts with ATP; sequence GTHGKTT.

Belongs to the MurCDEF family.

It is found in the cytoplasm. The enzyme catalyses UDP-N-acetyl-alpha-D-muramate + L-alanine + ATP = UDP-N-acetyl-alpha-D-muramoyl-L-alanine + ADP + phosphate + H(+). Its pathway is cell wall biogenesis; peptidoglycan biosynthesis. Functionally, cell wall formation. The chain is UDP-N-acetylmuramate--L-alanine ligase from Psychromonas ingrahamii (strain DSM 17664 / CCUG 51855 / 37).